Reading from the N-terminus, the 461-residue chain is Photosystem II CP43 reaction center protein (461 aa).

Positions Met-1–Glu-2 are excised as a propeptide. Thr-3 carries the N-acetylthreonine modification. A Phosphothreonine modification is found at Thr-3. Helical transmembrane passes span Leu-57–Ala-81, Leu-122–Asn-143, Lys-166–Thr-188, Gln-243–Ser-263, and Trp-279–Ser-300. Glu-355 provides a ligand contact to [CaMn4O5] cluster. Residues Arg-435–Pro-459 traverse the membrane as a helical segment.

The protein belongs to the PsbB/PsbC family. PsbC subfamily. In terms of assembly, PSII is composed of 1 copy each of membrane proteins PsbA, PsbB, PsbC, PsbD, PsbE, PsbF, PsbH, PsbI, PsbJ, PsbK, PsbL, PsbM, PsbT, PsbX, PsbY, PsbZ, Psb30/Ycf12, at least 3 peripheral proteins of the oxygen-evolving complex and a large number of cofactors. It forms dimeric complexes. Requires Binds multiple chlorophylls and provides some of the ligands for the Ca-4Mn-5O cluster of the oxygen-evolving complex. It may also provide a ligand for a Cl- that is required for oxygen evolution. PSII binds additional chlorophylls, carotenoids and specific lipids. as cofactor.

It is found in the plastid. It localises to the chloroplast thylakoid membrane. One of the components of the core complex of photosystem II (PSII). It binds chlorophyll and helps catalyze the primary light-induced photochemical processes of PSII. PSII is a light-driven water:plastoquinone oxidoreductase, using light energy to abstract electrons from H(2)O, generating O(2) and a proton gradient subsequently used for ATP formation. This chain is Photosystem II CP43 reaction center protein, found in Oedogonium cardiacum (Filamentous green alga).